The primary structure comprises 198 residues: Probable GTP-binding protein EngB (198 aa).

The EngB-type G domain occupies 21–195; it reads NFSEVAFLGR…EDIIINQTLG (175 aa). Residues 29 to 36, 56 to 60, 81 to 84, 151 to 154, and 174 to 176 contribute to the GTP site; these read GRSNVGKS, GKTQL, DLPG, TKCD, and VSN. Serine 36 and threonine 58 together coordinate Mg(2+).

It belongs to the TRAFAC class TrmE-Era-EngA-EngB-Septin-like GTPase superfamily. EngB GTPase family. Mg(2+) serves as cofactor.

Functionally, necessary for normal cell division and for the maintenance of normal septation. The chain is Probable GTP-binding protein EngB from Campylobacter jejuni subsp. jejuni serotype O:2 (strain ATCC 700819 / NCTC 11168).